The primary structure comprises 109 residues: COX assembly mitochondrial protein 2 (109 aa).

One can recognise a CHCH domain in the interval 10–54 (FHSCLDFINALDKCHQKEYYKRIFGLCNNEKDALNKCLKEASLNN). 2 consecutive short sequence motifs (cx9C motif) follow at residues 13 to 23 (CLDFINALDKC) and 36 to 46 (CNNEKDALNKC). 2 disulfide bridges follow: Cys-13–Cys-46 and Cys-23–Cys-36.

This sequence belongs to the CMC family. In terms of assembly, interacts with CMC1.

The protein localises to the mitochondrion inner membrane. Its subcellular location is the mitochondrion intermembrane space. Required for mitochondrial cytochrome c oxidase (COX) assembly and respiration. May be involved in copper trafficking and distribution to mitochondrial COX and SOD1. The protein is COX assembly mitochondrial protein 2 (CMC2) of Saccharomyces cerevisiae (strain ATCC 204508 / S288c) (Baker's yeast).